The following is a 376-amino-acid chain: Flap endonuclease 1 (376 aa).

An N-domain region spans residues 1 to 105 (MGIKGLSKLL…GELNKRKENA (105 aa)). D34 is a binding site for Mg(2+). 2 residues coordinate DNA: R47 and R71. Mg(2+) is bound by residues D87, E159, E161, D180, and D182. Residues 123-254 (QAKKLMKRTA…ITAFELIQQY (132 aa)) form an I-domain region. Residue E159 participates in DNA binding. DNA contacts are provided by G232 and D234. Mg(2+) is bound at residue D234. Residues 336–344 (AQGRLDSFF) form an interaction with PCNA region. The tract at residues 352–376 (SKSEAASGVKRKKPTTKAKESRKKK) is disordered. Positions 360–376 (VKRKKPTTKAKESRKKK) are enriched in basic residues.

This sequence belongs to the XPG/RAD2 endonuclease family. FEN1 subfamily. In terms of assembly, interacts with PCNA. Three molecules of FEN1 bind to one PCNA trimer with each molecule binding to one PCNA monomer. PCNA stimulates the nuclease activity without altering cleavage specificity. It depends on Mg(2+) as a cofactor. Phosphorylated. Phosphorylation upon DNA damage induces relocalization to the nuclear plasma.

It localises to the nucleus. The protein localises to the nucleolus. The protein resides in the nucleoplasm. It is found in the mitochondrion. Structure-specific nuclease with 5'-flap endonuclease and 5'-3' exonuclease activities involved in DNA replication and repair. During DNA replication, cleaves the 5'-overhanging flap structure that is generated by displacement synthesis when DNA polymerase encounters the 5'-end of a downstream Okazaki fragment. It enters the flap from the 5'-end and then tracks to cleave the flap base, leaving a nick for ligation. Also involved in the long patch base excision repair (LP-BER) pathway, by cleaving within the apurinic/apyrimidinic (AP) site-terminated flap. Acts as a genome stabilization factor that prevents flaps from equilibrating into structures that lead to duplications and deletions. Also possesses 5'-3' exonuclease activity on nicked or gapped double-stranded DNA, and exhibits RNase H activity. Also involved in replication and repair of rDNA and in repairing mitochondrial DNA. The polypeptide is Flap endonuclease 1 (Entamoeba dispar (strain ATCC PRA-260 / SAW760)).